A 385-amino-acid polypeptide reads, in one-letter code: m7GpppN-mRNA hydrolase (385 aa).

Positions 95–226 constitute a Nudix hydrolase domain; the sequence is MGVPTYGAII…KLGLAPNKFF (132 aa). Residues 129–150 carry the Nudix box motif; sequence GKVNKEEAPHDCAAREVFEETG. E144 and E148 together coordinate Mn(2+). Phosphoserine occurs at positions 246, 247, 249, 276, and 284. Positions 247-266 are disordered; sequence SDSDNGFSSTGSTPAKPTVE. The segment covering 249-259 has biased composition (low complexity); that stretch reads SDNGFSSTGST.

Belongs to the Nudix hydrolase family. DCP2 subfamily. As to quaternary structure, found in a mRNA decay complex with LSM1, LSM3, LSM4, EXOSC2, EXOSC4, EXOSC10, PARN, XRN1, CNOT6, UPF1, UPF2 and UPF3B. Forms a complex with DCP1A, EDC3, DDX6 and EDC4/HEDLS, within this complex directly interacts with EDC4/HEDLS. Interacts with DPC1B, UPF1, UPF2 and UPF3B. Associates with polysomes. Interacts (via N-terminus and C-terminus) with TRIM21 (via N-terminus and C-terminus). Interacts with LIMD1, WTIP and AJUBA. Interacts with DDX17 in an RNA-dependent manner. Interacts with ZC3HAV1. Interacts with APOBEC3G in an RNA-dependent manner. Interacts with ZFP36L1 (via N-terminus). Interacts with NBDY. It depends on Mn(2+) as a cofactor. The cofactor is Mg(2+).

Its subcellular location is the cytoplasm. It is found in the P-body. It localises to the nucleus. It carries out the reaction a 5'-end (N(7)-methyl 5'-triphosphoguanosine)-ribonucleoside in mRNA + H2O = N(7)-methyl-GDP + a 5'-end phospho-ribonucleoside in mRNA + 2 H(+). Its function is as follows. Decapping metalloenzyme that catalyzes the cleavage of the cap structure on mRNAs. Removes the 7-methyl guanine cap structure from mRNA molecules, yielding a 5'-phosphorylated mRNA fragment and 7m-GDP. Necessary for the degradation of mRNAs, both in normal mRNA turnover and in nonsense-mediated mRNA decay. Plays a role in replication-dependent histone mRNA degradation. Has higher activity towards mRNAs that lack a poly(A) tail. Has no activity towards a cap structure lacking an RNA moiety. The presence of a N(6)-methyladenosine methylation at the second transcribed position of mRNAs (N(6),2'-O-dimethyladenosine cap; m6A(m)) provides resistance to DCP2-mediated decapping. Blocks autophagy in nutrient-rich conditions by repressing the expression of ATG-related genes through degradation of their transcripts. The polypeptide is m7GpppN-mRNA hydrolase (DCP2) (Pongo abelii (Sumatran orangutan)).